Consider the following 868-residue polypeptide: Leucine--tRNA ligase (868 aa).

The short motif at 42–52 (PYPSGKLHMGH) is the 'HIGH' region element. A 'KMSKS' region motif is present at residues 627 to 631 (KMSKS). Position 630 (K630) interacts with ATP.

The protein belongs to the class-I aminoacyl-tRNA synthetase family.

It localises to the cytoplasm. The catalysed reaction is tRNA(Leu) + L-leucine + ATP = L-leucyl-tRNA(Leu) + AMP + diphosphate. This is Leucine--tRNA ligase from Pseudomonas putida (strain GB-1).